The following is a 229-amino-acid chain: Orotate phosphoribosyltransferase (229 aa).

5-phospho-alpha-D-ribose 1-diphosphate contacts are provided by residues Arg-107, Lys-108, Lys-111, His-113, and 133-141; that span reads EDLTTAGGS. An orotate-binding site is contributed by Thr-137.

It belongs to the purine/pyrimidine phosphoribosyltransferase family. PyrE subfamily. As to quaternary structure, homodimer. The cofactor is Mg(2+).

It carries out the reaction orotidine 5'-phosphate + diphosphate = orotate + 5-phospho-alpha-D-ribose 1-diphosphate. The protein operates within pyrimidine metabolism; UMP biosynthesis via de novo pathway; UMP from orotate: step 1/2. Its function is as follows. Catalyzes the transfer of a ribosyl phosphate group from 5-phosphoribose 1-diphosphate to orotate, leading to the formation of orotidine monophosphate (OMP). In Rhizobium etli (strain CIAT 652), this protein is Orotate phosphoribosyltransferase.